We begin with the raw amino-acid sequence, 78 residues long: UPF0291 protein LBUL_1264 (78 aa).

The protein belongs to the UPF0291 family.

It is found in the cytoplasm. This chain is UPF0291 protein LBUL_1264, found in Lactobacillus delbrueckii subsp. bulgaricus (strain ATCC BAA-365 / Lb-18).